We begin with the raw amino-acid sequence, 217 residues long: Pyridoxine/pyridoxamine 5'-phosphate oxidase (217 aa).

Residues 13-16 (RREY) and Lys71 contribute to the substrate site. Residues 66 to 71 (RIVLLK), 81 to 82 (YT), Arg87, Lys88, and Gln110 contribute to the FMN site. Positions 128, 132, and 136 each coordinate substrate. Residues 145–146 (QS) and Trp190 each bind FMN. Residue 196-198 (RLH) participates in substrate binding. An FMN-binding site is contributed by Arg200.

The protein belongs to the pyridoxamine 5'-phosphate oxidase family. As to quaternary structure, homodimer. FMN is required as a cofactor.

It carries out the reaction pyridoxamine 5'-phosphate + O2 + H2O = pyridoxal 5'-phosphate + H2O2 + NH4(+). The catalysed reaction is pyridoxine 5'-phosphate + O2 = pyridoxal 5'-phosphate + H2O2. The protein operates within cofactor metabolism; pyridoxal 5'-phosphate salvage; pyridoxal 5'-phosphate from pyridoxamine 5'-phosphate: step 1/1. It participates in cofactor metabolism; pyridoxal 5'-phosphate salvage; pyridoxal 5'-phosphate from pyridoxine 5'-phosphate: step 1/1. Catalyzes the oxidation of either pyridoxine 5'-phosphate (PNP) or pyridoxamine 5'-phosphate (PMP) into pyridoxal 5'-phosphate (PLP). In Yersinia enterocolitica serotype O:8 / biotype 1B (strain NCTC 13174 / 8081), this protein is Pyridoxine/pyridoxamine 5'-phosphate oxidase.